The primary structure comprises 224 residues: UPF0758 protein PFL_6051 (224 aa).

Residues 102 to 224 enclose the MPN domain; the sequence is ALENPLVVRD…PLSMAEYGWI (123 aa). Zn(2+) contacts are provided by His-173, His-175, and Asp-186. The JAMM motif motif lies at 173 to 186; that stretch reads HNHPSGICEPSPAD.

This sequence belongs to the UPF0758 family.

The protein is UPF0758 protein PFL_6051 of Pseudomonas fluorescens (strain ATCC BAA-477 / NRRL B-23932 / Pf-5).